The sequence spans 235 residues: Phosphoribosylaminoimidazole-succinocarboxamide synthase (235 aa).

The protein belongs to the SAICAR synthetase family.

The catalysed reaction is 5-amino-1-(5-phospho-D-ribosyl)imidazole-4-carboxylate + L-aspartate + ATP = (2S)-2-[5-amino-1-(5-phospho-beta-D-ribosyl)imidazole-4-carboxamido]succinate + ADP + phosphate + 2 H(+). Its pathway is purine metabolism; IMP biosynthesis via de novo pathway; 5-amino-1-(5-phospho-D-ribosyl)imidazole-4-carboxamide from 5-amino-1-(5-phospho-D-ribosyl)imidazole-4-carboxylate: step 1/2. The sequence is that of Phosphoribosylaminoimidazole-succinocarboxamide synthase from Clostridium botulinum (strain Eklund 17B / Type B).